A 233-amino-acid chain; its full sequence is Ribose-5-phosphate isomerase A (233 aa).

Residues 28–31 (SGST), 83–86 (DGAD), and 96–99 (KGGG) contribute to the substrate site. Glu105 functions as the Proton acceptor in the catalytic mechanism. A substrate-binding site is contributed by Lys123.

Belongs to the ribose 5-phosphate isomerase family. Homodimer.

The enzyme catalyses aldehydo-D-ribose 5-phosphate = D-ribulose 5-phosphate. The protein operates within carbohydrate degradation; pentose phosphate pathway; D-ribose 5-phosphate from D-ribulose 5-phosphate (non-oxidative stage): step 1/1. In terms of biological role, catalyzes the reversible conversion of ribose-5-phosphate to ribulose 5-phosphate. In Bartonella bacilliformis (strain ATCC 35685 / KC583 / Herrer 020/F12,63), this protein is Ribose-5-phosphate isomerase A.